The chain runs to 844 residues: Penicillin-binding protein 1B (844 aa).

The segment covering 1–10 (MAGNDREPIG) has biased composition (basic and acidic residues). The interval 1-60 (MAGNDREPIGRKGKPTRPVKQKVSRRRYEDDDDYDDYDDYEDEEPMPRKGKGKGKGRKPR) is disordered. Residues 1–63 (MAGNDREPIG…GKGRKPRGKR (63 aa)) are Cytoplasmic-facing. Over residues 11-25 (RKGKPTRPVKQKVSR) the composition is skewed to basic residues. Over residues 30–44 (DDDDYDDYDDYEDEE) the composition is skewed to acidic residues. A compositionally biased stretch (basic residues) spans 48-60 (RKGKGKGKGRKPR). A helical; Signal-anchor for type II membrane protein transmembrane segment spans residues 64-87 (GWLWLLLKLAIVFAVLIAIYGVYL). A membrane association region spans residues 88–250 (DQKIRSRIDG…DGISLYSIGR (163 aa)). Topologically, residues 88-844 (DQKIRSRIDG…GWIKDMFGSN (757 aa)) are periplasmic. The uvrB domain 2 homolog stretch occupies residues 109-200 (RMVNLEPDMT…QFGFFRLDPR (92 aa)). Residues 195-367 (FRLDPRLITM…SIYNPWRNPK (173 aa)) form a transglycosylase region. Glu233 serves as the catalytic Proton donor; for transglycosylase activity. Residues 444 to 736 (SVAQDAAEKA…NNQPTKLYGA (293 aa)) form a transpeptidase region. The Acyl-ester intermediate; for transpeptidase activity role is filled by Ser510. The span at 793–825 (LCQQSEMQQQPSGNPFDQSSQPQQQPQQQPAQQ) shows a compositional bias: low complexity. Residues 793–835 (LCQQSEMQQQPSGNPFDQSSQPQQQPQQQPAQQEQKDSDGVAG) form a disordered region.

It in the N-terminal section; belongs to the glycosyltransferase 51 family. In the C-terminal section; belongs to the transpeptidase family. Forms a trimeric complex with MipA and MltA. Has also been shown to exist as monomer or homodimer; homodimer of Alpha and Gamma isozymes can be found. Interacts with UvrA, FtsL and FtsN.

It is found in the cell inner membrane. The catalysed reaction is [GlcNAc-(1-&gt;4)-Mur2Ac(oyl-L-Ala-gamma-D-Glu-L-Lys-D-Ala-D-Ala)](n)-di-trans,octa-cis-undecaprenyl diphosphate + beta-D-GlcNAc-(1-&gt;4)-Mur2Ac(oyl-L-Ala-gamma-D-Glu-L-Lys-D-Ala-D-Ala)-di-trans,octa-cis-undecaprenyl diphosphate = [GlcNAc-(1-&gt;4)-Mur2Ac(oyl-L-Ala-gamma-D-Glu-L-Lys-D-Ala-D-Ala)](n+1)-di-trans,octa-cis-undecaprenyl diphosphate + di-trans,octa-cis-undecaprenyl diphosphate + H(+). The enzyme catalyses Preferential cleavage: (Ac)2-L-Lys-D-Ala-|-D-Ala. Also transpeptidation of peptidyl-alanyl moieties that are N-acyl substituents of D-alanine.. The protein operates within cell wall biogenesis; peptidoglycan biosynthesis. Functionally, cell wall formation. Synthesis of cross-linked peptidoglycan from the lipid intermediates. The enzyme has a penicillin-insensitive transglycosylase N-terminal domain (formation of linear glycan strands) and a penicillin-sensitive transpeptidase C-terminal domain (cross-linking of the peptide subunits). This is Penicillin-binding protein 1B (mrcB) from Escherichia coli (strain K12).